We begin with the raw amino-acid sequence, 120 residues long: MNAPDRFELFVLPDGAKKVTMVRDTKIPNASMFTILKEDHTIGNLIRMQLIADQDIIFAGYRMPHPLEHNVNIRIQTNNNTNPLECVQKSMECLSREFTSLENSFIEQVQKKRNVADQYI.

The protein belongs to the archaeal Rpo11/eukaryotic RPB11/RPC19 RNA polymerase subunit family. As to quaternary structure, component of the RNA polymerase II (Pol II) complex consisting of 12 subunits.

Its subcellular location is the nucleus. In terms of biological role, DNA-dependent RNA polymerase catalyzes the transcription of DNA into RNA using the four ribonucleoside triphosphates as substrates. Component of RNA polymerase II which synthesizes mRNA precursors and many functional non-coding RNAs. Pol II is the central component of the basal RNA polymerase II transcription machinery. It is composed of mobile elements that move relative to each other. RPB11 is part of the core element with the central large cleft. The protein is DNA-directed RNA polymerase II subunit rpb11 (polr2j) of Dictyostelium discoideum (Social amoeba).